Here is a 409-residue protein sequence, read N- to C-terminus: Argininosuccinate synthase (409 aa).

ATP contacts are provided by residues 11–19 and Ala-38; that span reads AYSGGLDTS. Positions 91 and 96 each coordinate L-citrulline. Residue Gly-121 coordinates ATP. Thr-123, Asn-127, and Asp-128 together coordinate L-aspartate. Residue Asn-127 participates in L-citrulline binding. The L-citrulline site is built by Arg-131, Ser-182, Ser-191, Glu-267, and Tyr-279.

The protein belongs to the argininosuccinate synthase family. Type 1 subfamily. Homotetramer.

It localises to the cytoplasm. The catalysed reaction is L-citrulline + L-aspartate + ATP = 2-(N(omega)-L-arginino)succinate + AMP + diphosphate + H(+). The protein operates within amino-acid biosynthesis; L-arginine biosynthesis; L-arginine from L-ornithine and carbamoyl phosphate: step 2/3. The chain is Argininosuccinate synthase from Nitrobacter winogradskyi (strain ATCC 25391 / DSM 10237 / CIP 104748 / NCIMB 11846 / Nb-255).